The sequence spans 258 residues: UPF0758 protein Bamb_2548 (258 aa).

A disordered region spans residues 1-43 (MLSPCLAAPATECRDPADAPAAPARHTGPARPRKRRPRNWKPH). Residues 31–43 (RPRKRRPRNWKPH) show a composition bias toward basic residues. Positions 136-258 (QIDSPGAVED…TFSFARAGWL (123 aa)) constitute an MPN domain. 3 residues coordinate Zn(2+): histidine 207, histidine 209, and aspartate 220. The JAMM motif motif lies at 207-220 (HNHPSGAVQPSAED).

It belongs to the UPF0758 family.

This Burkholderia ambifaria (strain ATCC BAA-244 / DSM 16087 / CCUG 44356 / LMG 19182 / AMMD) (Burkholderia cepacia (strain AMMD)) protein is UPF0758 protein Bamb_2548.